A 1916-amino-acid chain; its full sequence is Endoribonuclease Dicer (1916 aa).

A Helicase ATP-binding domain is found at 51 to 227 (LLEAALDHNT…ELEEKIQKLE (177 aa)). Residue 64-71 (LNTGSGKT) coordinates ATP. The DECH box signature appears at 175–178 (DECH). The tract at residues 256 to 595 (DCGPFTDRSG…LRNKCSKSAD (340 aa)) is required for interaction with PRKRA and TARBP2. The interval 409 to 433 (YVSWSDSEDDDDDEEIEEKEKPETN) is disordered. Residues S413 and S415 each carry the phosphoserine modification. A compositionally biased stretch (acidic residues) spans 414 to 425 (DSEDDDDDEEIE). One can recognise a Helicase C-terminal domain in the interval 433-602 (NFPSPFTNIL…SADGAEADVH (170 aa)). The Dicer dsRNA-binding fold domain maps to 630–722 (AIGHINRYCA…MPVGKETVKY (93 aa)). The segment at 726–745 (LDLHDEEETSVPGRPGSTKR) is disordered. Positions 895 to 1042 (KFMEDIEKSE…LVPELCAIHP (148 aa)) constitute a PAZ domain. Residues S1016 and S1160 each carry the phosphoserine modification. The 128-residue stretch at 1276–1403 (DSEQSPSVGY…SEKWEKDEMT (128 aa)) folds into the RNase III 1 domain. Mg(2+)-binding residues include E1316, E1395, and E1398. A phosphoserine mark is found at S1456, S1464, and S1466. Residues 1598 to 1626 (ALDPAQENGSSQQKSLSGSCAAPVGPRSS) are disordered. Over residues 1604–1615 (ENGSSQQKSLSG) the composition is skewed to polar residues. One can recognise an RNase III 2 domain in the interval 1660–1818 (FETFEKKINY…LAGAIYMDSG (159 aa)). 3 residues coordinate Mg(2+): E1699, D1804, and E1807. The DRBM domain maps to 1843–1908 (VPRSPVRELL…ARRALRSLKA (66 aa)). Position 1862 is a phosphoserine (S1862).

This sequence belongs to the helicase family. Dicer subfamily. As to quaternary structure, component of the RISC loading complex (RLC), or micro-RNA (miRNA) loading complex (miRLC), which is composed of DICER1, AGO2 and TARBP2; DICER1 and TARBP2 are required to process precursor miRNAs (pre-miRNAs) to mature miRNAs and then load them onto AGO2. Note that the trimeric RLC/miRLC is also referred to as RISC. Interacts with DHX9, AGO1, PIWIL1 and PRKRA. Interacts with AGO2, TARBP2, EIF6, MOV10 and RPL7A (60S ribosome subunit); they form a large RNA-induced silencing complex (RISC). Interacts with BCDIN3D. Interacts (via Dicer dsRNA-binding fold domain) with ALOX5 (via PLAT domain); this interaction enhances arachidonate 5-lipoxygenase activity and modifies the miRNA precursor processing activity of DICER1. The cofactor is Mg(2+). Mn(2+) is required as a cofactor. Isoform 1 is expressed in a wide variety of tissues. Isoform 2 is specifically expressed in oocytes during their growth (at protein level).

It is found in the cytoplasm. It carries out the reaction Endonucleolytic cleavage to 5'-phosphomonoester.. Functionally, double-stranded RNA (dsRNA) endoribonuclease playing a central role in short dsRNA-mediated post-transcriptional gene silencing. Cleaves naturally occurring long dsRNAs and short hairpin pre-microRNAs (miRNA) into fragments of twenty-one to twenty-three nucleotides with 3' overhang of two nucleotides, producing respectively short interfering RNAs (siRNA) and mature microRNAs. SiRNAs and miRNAs serve as guide to direct the RNA-induced silencing complex (RISC) to complementary RNAs to degrade them or prevent their translation. Gene silencing mediated by siRNAs, also called RNA interference, controls the elimination of transcripts from mobile and repetitive DNA elements of the genome but also the degradation of exogenous RNA of viral origin for instance. The miRNA pathway on the other side is a mean to specifically regulate the expression of target genes. More active than isoform 1 to process long double-stranded RNA into siRNAs. Responsible for the accumulation of endogenous siRNAs observed in mouse oocytes compared to somatic cells and it regulates meiotic spindle organization in female germline. The chain is Endoribonuclease Dicer (Dicer1) from Mus musculus (Mouse).